The following is a 440-amino-acid chain: Xaa-Pro dipeptidase (440 aa).

5 residues coordinate Mn(2+): D244, D255, H335, E380, and E419.

This sequence belongs to the peptidase M24B family. Bacterial-type prolidase subfamily. Requires Mn(2+) as cofactor.

The enzyme catalyses Xaa-L-Pro dipeptide + H2O = an L-alpha-amino acid + L-proline. In terms of biological role, splits dipeptides with a prolyl residue in the C-terminal position. The polypeptide is Xaa-Pro dipeptidase (Shewanella baltica (strain OS223)).